A 133-amino-acid polypeptide reads, in one-letter code: MADRIELRGLTVHGRHGVYDHERVAGQRFVIDVTVWIDLAEAANSDDLADTYDYVRLASRAAEIVAGPPRKLIETVGAEIADHVMDDQRVHAVEVAVHKPQAPIPQTFDDVAVVIRRSRRGGRGWVVPAGGAV.

Substrate is bound by residues glutamate 22, tyrosine 54, and 73-74 (IE). Lysine 99 acts as the Proton donor/acceptor in catalysis.

Belongs to the DHNA family.

The catalysed reaction is 7,8-dihydroneopterin = 6-hydroxymethyl-7,8-dihydropterin + glycolaldehyde. It carries out the reaction 7,8-dihydroneopterin = 7,8-dihydromonapterin. It catalyses the reaction 7,8-dihydroneopterin + O2 = 7,8-dihydroxanthopterin + glycolaldehyde + formate + H(+). It functions in the pathway cofactor biosynthesis; tetrahydrofolate biosynthesis; 2-amino-4-hydroxy-6-hydroxymethyl-7,8-dihydropteridine diphosphate from 7,8-dihydroneopterin triphosphate: step 3/4. Functionally, catalyzes the conversion of 7,8-dihydroneopterin to 6-hydroxymethyl-7,8-dihydropterin, 7,8-dihydromonapterin and 7,8-dihydroxanthopterin, respectively, in equal quantities. After longer incubation times the only product is 6-hydroxymethyl-7,8-dihydropterin. The polypeptide is Dihydroneopterin aldolase (folB) (Mycobacterium tuberculosis (strain CDC 1551 / Oshkosh)).